We begin with the raw amino-acid sequence, 199 residues long: Probable GTP-binding protein EngB (199 aa).

The EngB-type G domain maps to 21 to 196; it reads TKPEYAFIGR…LTYIDEINKQ (176 aa). GTP-binding positions include 29-36, 56-60, 74-77, 141-144, and 175-177; these read GRSNVGKS, GKTQL, DLPG, TKID, and TSS. The Mg(2+) site is built by serine 36 and threonine 58.

This sequence belongs to the TRAFAC class TrmE-Era-EngA-EngB-Septin-like GTPase superfamily. EngB GTPase family. Mg(2+) serves as cofactor.

In terms of biological role, necessary for normal cell division and for the maintenance of normal septation. This chain is Probable GTP-binding protein EngB, found in Cytophaga hutchinsonii (strain ATCC 33406 / DSM 1761 / CIP 103989 / NBRC 15051 / NCIMB 9469 / D465).